The sequence spans 346 residues: Tetraacyldisaccharide 4'-kinase (346 aa).

54 to 61 (TVGGAGKT) contributes to the ATP binding site.

The protein belongs to the LpxK family.

The enzyme catalyses a lipid A disaccharide + ATP = a lipid IVA + ADP + H(+). It participates in glycolipid biosynthesis; lipid IV(A) biosynthesis; lipid IV(A) from (3R)-3-hydroxytetradecanoyl-[acyl-carrier-protein] and UDP-N-acetyl-alpha-D-glucosamine: step 6/6. Functionally, transfers the gamma-phosphate of ATP to the 4'-position of a tetraacyldisaccharide 1-phosphate intermediate (termed DS-1-P) to form tetraacyldisaccharide 1,4'-bis-phosphate (lipid IVA). This is Tetraacyldisaccharide 4'-kinase from Rhizobium meliloti (strain 1021) (Ensifer meliloti).